The sequence spans 151 residues: Large ribosomal subunit protein bL9 (151 aa).

Belongs to the bacterial ribosomal protein bL9 family.

Its function is as follows. Binds to the 23S rRNA. In Rhodococcus erythropolis (strain PR4 / NBRC 100887), this protein is Large ribosomal subunit protein bL9.